A 196-amino-acid polypeptide reads, in one-letter code: ATP-dependent Clp protease proteolytic subunit (196 aa).

Ser-98 serves as the catalytic Nucleophile. His-123 is an active-site residue.

Belongs to the peptidase S14 family. Fourteen ClpP subunits assemble into 2 heptameric rings which stack back to back to give a disk-like structure with a central cavity, resembling the structure of eukaryotic proteasomes.

Its subcellular location is the cytoplasm. The enzyme catalyses Hydrolysis of proteins to small peptides in the presence of ATP and magnesium. alpha-casein is the usual test substrate. In the absence of ATP, only oligopeptides shorter than five residues are hydrolyzed (such as succinyl-Leu-Tyr-|-NHMec, and Leu-Tyr-Leu-|-Tyr-Trp, in which cleavage of the -Tyr-|-Leu- and -Tyr-|-Trp bonds also occurs).. Functionally, cleaves peptides in various proteins in a process that requires ATP hydrolysis. Has a chymotrypsin-like activity. Plays a major role in the degradation of misfolded proteins. In Geobacillus sp. (strain WCH70), this protein is ATP-dependent Clp protease proteolytic subunit.